A 225-amino-acid chain; its full sequence is UPF0758 protein Sputw3181_0338 (225 aa).

Residues 102–224 (VLTNPDLTRD…IVSFAERGWI (123 aa)) form the MPN domain. Residues histidine 173, histidine 175, and aspartate 186 each coordinate Zn(2+). The JAMM motif signature appears at 173–186 (HNHPSGIAEPSQAD).

Belongs to the UPF0758 family.

The sequence is that of UPF0758 protein Sputw3181_0338 from Shewanella sp. (strain W3-18-1).